The primary structure comprises 217 residues: GTP cyclohydrolase 1 (217 aa).

Residues cysteine 109, histidine 112, and cysteine 180 each coordinate Zn(2+).

It belongs to the GTP cyclohydrolase I family. As to quaternary structure, toroid-shaped homodecamer, composed of two pentamers of five dimers.

The enzyme catalyses GTP + H2O = 7,8-dihydroneopterin 3'-triphosphate + formate + H(+). Its pathway is cofactor biosynthesis; 7,8-dihydroneopterin triphosphate biosynthesis; 7,8-dihydroneopterin triphosphate from GTP: step 1/1. The chain is GTP cyclohydrolase 1 from Vibrio parahaemolyticus serotype O3:K6 (strain RIMD 2210633).